Reading from the N-terminus, the 394-residue chain is Acid ceramidase (394 aa).

The signal sequence occupies residues Met1–Ala18. Cys30 and Cys339 are oxidised to a cystine. Cys142 functions as the Nucleophile in the catalytic mechanism. N-linked (GlcNAc...) asparagine glycans are attached at residues Asn172, Asn194, Asn258, Asn341, and Asn347. The cysteines at positions 387 and 391 are disulfide-linked.

The protein belongs to the acid ceramidase family. Heterodimer; disulfide-linked. The heterodimer is composed of the disulfide-linked alpha and beta chains produced by autocatalytic cleavage of the precursor. Post-translationally, N-glycosylated. In terms of processing, proteolytically cleaved into two chains alpha and beta that remain associated via a disulfide bond. Cleavage gives rise to a conformation change that activates the enzyme. The same catalytic Cys residue mediates the autoproteolytic cleavage and subsequent hydrolysis of lipid substrates. The beta chain may undergo an additional C-terminal processing. Widely expressed.

The protein localises to the lysosome. Its subcellular location is the secreted. The enzyme catalyses an N-acylsphing-4-enine + H2O = sphing-4-enine + a fatty acid. It catalyses the reaction N-dodecanoylsphing-4-enine + H2O = dodecanoate + sphing-4-enine. It carries out the reaction N-(9Z-octadecenoyl)-sphing-4-enine + H2O = sphing-4-enine + (9Z)-octadecenoate. The catalysed reaction is N-tetradecanoylsphing-4-enine + H2O = tetradecanoate + sphing-4-enine. The enzyme catalyses N-hexadecanoylsphing-4-enine + H2O = sphing-4-enine + hexadecanoate. It catalyses the reaction N-octadecanoylsphing-4-enine + H2O = sphing-4-enine + octadecanoate. It carries out the reaction N-dodecanoyl-(4R)-hydroxysphinganine + H2O = (4R)-hydroxysphinganine + dodecanoate. The catalysed reaction is N-(dodecanoyl)-sphinganine + H2O = dodecanoate + sphinganine. The enzyme catalyses N-(acetyl)-sphing-4-enine + H2O = sphing-4-enine + acetate. It catalyses the reaction N-(hexanoyl)sphing-4-enine + H2O = hexanoate + sphing-4-enine. It carries out the reaction N-octanoylsphing-4-enine + H2O = octanoate + sphing-4-enine. The catalysed reaction is N-dodecanoylethanolamine + H2O = dodecanoate + ethanolamine. Its pathway is lipid metabolism; sphingolipid metabolism. Its function is as follows. Lysosomal ceramidase that hydrolyzes sphingolipid ceramides into sphingosine and free fatty acids at acidic pH. Ceramides, sphingosine, and its phosphorylated form sphingosine-1-phosphate are bioactive lipids that mediate cellular signaling pathways regulating several biological processes including cell proliferation, apoptosis and differentiation. Has a higher catalytic efficiency towards C12-ceramides versus other ceramides. Also catalyzes the reverse reaction allowing the synthesis of ceramides from fatty acids and sphingosine. For the reverse synthetic reaction, the natural sphingosine D-erythro isomer is more efficiently utilized as a substrate compared to D-erythro-dihydrosphingosine and D-erythro-phytosphingosine, while the fatty acids with chain lengths of 12 or 14 carbons are the most efficiently used. Also has an N-acylethanolamine hydrolase activity. By regulating the levels of ceramides, sphingosine and sphingosine-1-phosphate in the epidermis, mediates the calcium-induced differentiation of epidermal keratinocytes. Also indirectly regulates tumor necrosis factor/TNF-induced apoptosis. By regulating the intracellular balance between ceramides and sphingosine, in adrenocortical cells, probably also acts as a regulator of steroidogenesis. In Mus musculus (Mouse), this protein is Acid ceramidase.